The following is a 513-amino-acid chain: L-threonine dehydratase biosynthetic IlvA (513 aa).

N6-(pyridoxal phosphate)lysine is present on Lys-61. Residues Asn-88, 187-191 (GGGGL), and Ser-314 contribute to the pyridoxal 5'-phosphate site. 2 ACT-like domains span residues 338 to 409 (ALLA…DLSN) and 432 to 504 (RLYS…DVTE).

This sequence belongs to the serine/threonine dehydratase family. In terms of assembly, homotetramer. Requires pyridoxal 5'-phosphate as cofactor.

It catalyses the reaction L-threonine = 2-oxobutanoate + NH4(+). It functions in the pathway amino-acid biosynthesis; L-isoleucine biosynthesis; 2-oxobutanoate from L-threonine: step 1/1. Catalyzes the anaerobic formation of alpha-ketobutyrate and ammonia from threonine in a two-step reaction. The first step involved a dehydration of threonine and a production of enamine intermediates (aminocrotonate), which tautomerizes to its imine form (iminobutyrate). Both intermediates are unstable and short-lived. The second step is the nonenzymatic hydrolysis of the enamine/imine intermediates to form 2-ketobutyrate and free ammonia. In the low water environment of the cell, the second step is accelerated by RidA. This chain is L-threonine dehydratase biosynthetic IlvA (ilvA), found in Pasteurella multocida (strain Pm70).